A 118-amino-acid chain; its full sequence is Large ribosomal subunit protein bL20 (118 aa).

It belongs to the bacterial ribosomal protein bL20 family.

Its function is as follows. Binds directly to 23S ribosomal RNA and is necessary for the in vitro assembly process of the 50S ribosomal subunit. It is not involved in the protein synthesizing functions of that subunit. In Desulfovibrio desulfuricans (strain ATCC 27774 / DSM 6949 / MB), this protein is Large ribosomal subunit protein bL20.